The sequence spans 1702 residues: Dicer-like protein 4 (1702 aa).

Disordered regions lie at residues M1–T52 and S89–P120. Positions G17–N31 are enriched in basic and acidic residues. A compositionally biased stretch (low complexity) spans S89–S105. Positions L131–S307 constitute a Helicase ATP-binding domain. L144–T151 lines the ATP pocket. The DECH box signature appears at D251–H254. Positions Q475–S629 constitute a Helicase C-terminal domain. The region spanning S656–D748 is the Dicer dsRNA-binding fold domain. The PAZ domain maps to L932–I1054. 2 consecutive RNase III domains span residues E1083 to G1251 and L1292 to G1436. Residues E1330, D1422, and E1425 each coordinate Mg(2+). DRBM domains follow at residues S1462 to A1528 and T1621 to H1697.

The protein belongs to the helicase family. Dicer subfamily. Interacts with DRB4. It depends on Mg(2+) as a cofactor. Requires Mn(2+) as cofactor.

Its subcellular location is the nucleus. In terms of biological role, ribonuclease (RNase) III involved in RNA-mediated post-transcriptional gene silencing (PTGS). Functions in the biogenesis of trans-acting small interfering RNAs (ta-siRNAs, derived from the TAS1, TAS2 or TAS3 endogenous transcripts) by cleaving small dsRNAs into 21-24 nucleotide ta-siRNAs. Functions with the dsRNA-binding protein DRB4 in ta-siRNAs processing. Acts in the RDR6/SGS3/DCL4/AGO7 ta-siRNA pathway involved in leaf developmental timing. Plays a role in transitive silencing of transgenes by processing secondary siRNAs. This pathway, which requires DCL2 and RDR6, amplifies silencing by using the target RNA as substrate to generate secondary siRNAs, providing an efficient mechanism for long-distance silencing. Required for the production of the 30-40 nucleotide bacterial-induced long siRNAs (lsiRNA). May participate with DCL3 in the production of 24 nucleotide repeat-associated siRNAs (ra-siRNAs) which derive from heterochromatin and DNA repeats such as transposons. Plays an important role in antiviral RNA silencing. Involved in the production of viral siRNAs derived from the cucumber mosaic virus (CMV), turnip crinkle virus (TCV) and tobacco rattle virus (TRV). Targeted by the viral silencing suppressor (VSR) protein 2b of the cucumber mosaic virus (CMV) that inactivates DCL4 function in RNA silencing. Does not seem to be involved in microRNAs (miRNAs) processing. The protein is Dicer-like protein 4 (DCL4) of Arabidopsis thaliana (Mouse-ear cress).